The following is a 174-amino-acid chain: von Hippel-Lindau tumor suppressor homolog (174 aa).

This sequence belongs to the VHL family. Interacts with hif-1 (hydroxylated on 'Pro-621'); the interaction induces hif-1 degradation. May be a component of the cullin E3 ubiquitin ligase complex.

The protein operates within protein modification; protein ubiquitination. In terms of biological role, involved in the response to variation in environmental oxygen levels by targeting the hypoxia-inducible transcription factor hif-1 for proteasomal degradation when oxygen levels are normal (around 20%). By regulating hif-1 expression, plays a role in iron homeostasis, aging, heat acclimation and progeny size. Mediates resistance to enteropathogenic E.coli. Mediates susceptibility to B.thuringiensis pore-forming toxins. Not involved in P.aeruginosa susceptibility. The chain is von Hippel-Lindau tumor suppressor homolog from Caenorhabditis elegans.